Here is a 271-residue protein sequence, read N- to C-terminus: Zinc-finger homeodomain protein 8 (271 aa).

Ser-16 bears the Phosphoserine mark. The ZF-HD dimerization-type; degenerate zinc finger occupies 56-107; the sequence is YKECLKNHAAGIGGHALDGCGEFMPSPSFNSNDPASLTCAACGCHRNFHRRE. Positions 125-154 are disordered; it reads HNRHQLPPPPPPHLAGIRSPDDDDSASPPP. A DNA-binding region (homeobox) is located at residues 179–242; it reads RKRFRTKFSQ…NNKISGRSGA (64 aa).

In terms of assembly, homo- and heterodimer with other ZFHD proteins. Interacts with MIF1, MIF2 and MIF3; these interactions prevent nuclear localization and DNA-binding to inhibit transcription regulation activity. Binds to ZHD1, ZHD2, ZHD4, ZHD10 and ZHD11. Interacts with HIPP30. In terms of tissue distribution, mostly expressed in flowers and inflorescence.

It localises to the nucleus. Functionally, putative transcription factor. This Arabidopsis thaliana (Mouse-ear cress) protein is Zinc-finger homeodomain protein 8 (ZHD8).